The primary structure comprises 641 residues: Chaperone protein DnaK (641 aa).

Thr200 carries the phosphothreonine; by autocatalysis modification. Positions 605 to 623 are enriched in low complexity; that stretch reads AAEQGGSADAASGNAQASK. Residues 605 to 628 are disordered; the sequence is AAEQGGSADAASGNAQASKAADDV.

It belongs to the heat shock protein 70 family.

In terms of biological role, acts as a chaperone. The chain is Chaperone protein DnaK from Xanthomonas oryzae pv. oryzae (strain KACC10331 / KXO85).